We begin with the raw amino-acid sequence, 39 residues long: Natriuretic peptide CnNP-a (39 aa).

The propeptide occupies 1–8 (SGSKTAKI). An intrachain disulfide couples Cys12 to Cys28.

It belongs to the natriuretic peptide family. In terms of tissue distribution, expressed by the venom gland.

It is found in the secreted. Its function is as follows. Snake venom natriuretic peptide that targets both NPR1 and NPR2. Exhibits hypotensive and vasodepressor activities. The polypeptide is Natriuretic peptide CnNP-a (Cryptophis nigrescens (Eastern small-eyed snake)).